The following is a 379-amino-acid chain: Alkanesulfonate monooxygenase (379 aa).

Belongs to the SsuD family.

It catalyses the reaction an alkanesulfonate + FMNH2 + O2 = an aldehyde + FMN + sulfite + H2O + 2 H(+). Its function is as follows. Catalyzes the desulfonation of aliphatic sulfonates. This Pseudomonas syringae pv. tomato (strain ATCC BAA-871 / DC3000) protein is Alkanesulfonate monooxygenase.